We begin with the raw amino-acid sequence, 234 residues long: Urease subunit alpha (234 aa).

Positions 1–102 are urease gamma; sequence MKLTPKELDK…LVTIHTPVEA (102 aa). The segment at 103–234 is urease beta; sequence GSDKLAPGEV…GTINCGCDNK (132 aa).

It in the N-terminal section; belongs to the urease gamma subunit family. The protein in the C-terminal section; belongs to the urease beta subunit family. In terms of assembly, heterohexamer of 3 UreA (alpha) and 3 UreB (beta) subunits.

It localises to the cytoplasm. It carries out the reaction urea + 2 H2O + H(+) = hydrogencarbonate + 2 NH4(+). It participates in nitrogen metabolism; urea degradation; CO(2) and NH(3) from urea (urease route): step 1/1. The protein is Urease subunit alpha of Helicobacter heilmannii.